Here is a 347-residue protein sequence, read N- to C-terminus: Fatty acid elongase 2 (347 aa).

The Lumenal segment spans residues Met-1–Glu-62. Asn-32 is a glycosylation site (N-linked (GlcNAc...) asparagine). Residues Leu-63 to Phe-83 form a helical membrane-spanning segment. At Gly-84–Lys-96 the chain is on the cytoplasmic side. A helical membrane pass occupies residues Leu-97 to Met-119. The Lumenal segment spans residues Val-120–Gln-122. The chain crosses the membrane as a helical span at residues Leu-123–Trp-142. The Cytoplasmic segment spans residues Thr-143–Leu-146. A helical transmembrane segment spans residues Val-147 to Leu-169. At Lys-170–Ser-200 the chain is on the lumenal side. The HxxHH motif motif lies at His-178 to His-182. The chain crosses the membrane as a helical span at residues Trp-201–Ala-221. The Cytoplasmic portion of the chain corresponds to Ala-222–Glu-231. The helical transmembrane segment at Trp-232–Gln-254 threads the bilayer. Topologically, residues Lys-255–Thr-275 are lumenal. Residues Ala-276 to Ile-296 traverse the membrane as a helical segment. The Cytoplasmic segment spans residues Asn-297–Arg-347. Position 334 is a phosphothreonine (Thr-334). Phosphoserine occurs at positions 336 and 338. Positions Arg-344 to Arg-347 match the Di-lysine-like motif motif.

This sequence belongs to the ELO family.

It is found in the endoplasmic reticulum membrane. The enzyme catalyses a very-long-chain acyl-CoA + malonyl-CoA + H(+) = a very-long-chain 3-oxoacyl-CoA + CO2 + CoA. It carries out the reaction octadecanoyl-CoA + malonyl-CoA + H(+) = 3-oxoeicosanoyl-CoA + CO2 + CoA. The catalysed reaction is hexadecanoyl-CoA + malonyl-CoA + H(+) = 3-oxooctadecanoyl-CoA + CO2 + CoA. It catalyses the reaction eicosanoyl-CoA + malonyl-CoA + H(+) = 3-oxodocosanoyl-CoA + CO2 + CoA. The enzyme catalyses docosanoyl-CoA + malonyl-CoA + H(+) = 3-oxotetracosanoyl-CoA + CO2 + CoA. In terms of biological role, component of a microsomal membrane-bound long-chain fatty acid elongation system, which produces the 20-26-carbon very long-chain fatty acids (VLCFA) from long-chain fatty acid precursors and is involved ceramide and inositol sphingolipid biosynthesis. Component of elongase II, which elongates 16-18 carbon fatty acyl-CoAs such as palmitoyl-CoA and stearoyl-CoA to 20-22-carbon fatty acids by incorporation of malonyl-CoA. Involved in the synthesis of 1,3-beta-glucan. The enzymes active site faces the cytosol, whereas VLCFA length is determined by a lysine near the luminal end of transmembrane helix 6. Plays an important role in lipotoxic cell death induced by oleic acid through maintaining a balanced fatty acid composition in thr plasma membrane. This is Fatty acid elongase 2 from Saccharomyces cerevisiae (strain ATCC 204508 / S288c) (Baker's yeast).